The primary structure comprises 95 residues: Small ribosomal subunit protein bS20 (95 aa).

Belongs to the bacterial ribosomal protein bS20 family.

In terms of biological role, binds directly to 16S ribosomal RNA. In Ehrlichia chaffeensis (strain ATCC CRL-10679 / Arkansas), this protein is Small ribosomal subunit protein bS20.